Here is a 61-residue protein sequence, read N- to C-terminus: MRYIIAFIWTFLLSHMACYLVASMNSVTYNFKTSSVIAVVLYVLIMVLAEIMPMNKNASQH.

Transmembrane regions (helical) follow at residues 4 to 24 (IIAF…VASM) and 34 to 54 (SSVI…IMPM).

The protein localises to the cell membrane. This is an uncharacterized protein from Bacillus subtilis (strain 168).